Consider the following 480-residue polypeptide: EGF-like repeat and discoidin I-like domain-containing protein 3 (480 aa).

A signal peptide spans 1-23 (MKRSVAVWLLVGLSLGVPQFGKG). The EGF-like 1 domain occupies 24–60 (DICDPNPCENGGICLPGLADGSFSCECPDGFTDPNCS). 3 cysteine pairs are disulfide-bonded: cysteine 26/cysteine 37, cysteine 31/cysteine 48, and cysteine 50/cysteine 59. Threonine 73 carries O-linked (GalNAc...) threonine glycosylation. EGF-like domains are found at residues 74-117 (SAGP…IHCQ) and 119-155 (NINECEVEPCKNGGICTDLVANYSCECPGEFMGRNCQ). 3 disulfides stabilise this stretch: cysteine 78/cysteine 89, cysteine 83/cysteine 105, and cysteine 107/cysteine 116. O-linked (Fuc...) threonine glycosylation is present at threonine 88. Residues 96–98 (RGD) carry the Cell attachment site motif. Ca(2+) contacts are provided by asparagine 119, isoleucine 120, and glutamate 122. 6 disulfide bridges follow: cysteine 123–cysteine 134, cysteine 128–cysteine 143, cysteine 145–cysteine 154, cysteine 158–cysteine 314, cysteine 301–cysteine 305, and cysteine 319–cysteine 476. Ca(2+) contacts are provided by aspartate 136 and leucine 137. The N-linked (GlcNAc...) asparagine glycan is linked to asparagine 140. 2 F5/8 type C domains span residues 158–314 (CSGP…LLGC) and 319–476 (CSEP…LLGC).

It localises to the secreted. Its function is as follows. Promotes adhesion of endothelial cells through interaction with the alpha-v/beta-3 integrin receptor. Inhibits formation of vascular-like structures. May be involved in regulation of vascular morphogenesis of remodeling in embryonic development. The chain is EGF-like repeat and discoidin I-like domain-containing protein 3 (EDIL3) from Homo sapiens (Human).